The sequence spans 68 residues: Large ribosomal subunit protein eL24 (68 aa).

Residues Cys7, Cys10, Cys33, and Cys37 each contribute to the Zn(2+) site. The segment at 7-37 (CSYCGREFEPGTGKMFVRNDGRVLFFCSSKC) adopts a C4-type zinc-finger fold.

It belongs to the eukaryotic ribosomal protein eL24 family. Part of the 50S ribosomal subunit. Forms a cluster with proteins L3 and L14. Requires Zn(2+) as cofactor.

Functionally, binds to the 23S rRNA. The protein is Large ribosomal subunit protein eL24 of Thermococcus onnurineus (strain NA1).